The sequence spans 373 residues: Glutamine synthetase (373 aa).

N-acetylalanine is present on A2. The required for glutamine-induced ubiquitination by CRL4(CRBN) and proteasomal degradation stretch occupies residues 2 to 25 (ATSASSHLNKGIKQMYMSLPQGEK). K11 and K14 each carry N6-acetyllysine. Positions 24-106 (EKVQAMYIWV…VFCEVFKYNQ (83 aa)) constitute a GS beta-grasp domain. Y104 carries the phosphotyrosine modification. Residues 113–373 (LRHTCKRIMD…TGDQPFQYKN (261 aa)) form the GS catalytic domain. ATP is bound at residue E134. Positions 134, 136, 196, and 203 each coordinate Mn(2+). Position 203–208 (203–208 (EFQIGP)) interacts with ATP. 246 to 247 (NW) provides a ligand contact to L-glutamate. H253 is a binding site for Mn(2+). ATP-binding positions include 255–257 (NFS), R319, and R324. Position 319 (R319) interacts with L-glutamate. An ADP-binding site is contributed by 336 to 338 (YFE). E338 provides a ligand contact to Mn(2+). R340 lines the L-glutamate pocket. S343 bears the Phosphoserine mark.

It belongs to the glutamine synthetase family. As to quaternary structure, decamer; composed of two pentamers. Interacts with PALMD. Interacts with RHOJ. Interacts with BEST2; this interaction tethers a fraction of GLUL to the membrane, causing a decrease of cytosolic glutamine synthase (GS) activity and inhibits the chloride channel activity of BEST2 by affecting the gating at the aperture in the absence of intracellular glutamate. The cofactor is Mg(2+). Requires Mn(2+) as cofactor. Post-translationally, palmitoylated; undergoes autopalmitoylation. Acetylated by EP300/p300; acetylation is stimulated by increased glutamine levels and promotes ubiquitin-mediated proteasomal degradation. In terms of processing, ubiquitinated by ZNRF1. Ubiquitinated by the DCX (DDB1-CUL4-X-box) E3 ubiquitin-protein ligase complex called CRL4(CRBN), leading to proteasomal degradation.

It is found in the cytoplasm. It localises to the cytosol. The protein resides in the microsome. The protein localises to the mitochondrion. Its subcellular location is the cell membrane. The catalysed reaction is L-glutamate + NH4(+) + ATP = L-glutamine + ADP + phosphate + H(+). It catalyses the reaction L-cysteinyl-[protein] + hexadecanoyl-CoA = S-hexadecanoyl-L-cysteinyl-[protein] + CoA. With respect to regulation, glutamine synthetase activity is inhibited by methionine sulfoximine (MSO). Glutamine synthetase that catalyzes the ATP-dependent conversion of glutamate and ammonia to glutamine. Its role depends on tissue localization: in the brain, it regulates the levels of toxic ammonia and converts neurotoxic glutamate to harmless glutamine, whereas in the liver, it is one of the enzymes responsible for the removal of ammonia. Plays a key role in ammonium detoxification during erythropoiesis: the glutamine synthetase activity is required to remove ammonium generated by porphobilinogen deaminase (HMBS) during heme biosynthesis to prevent ammonium accumulation and oxidative stress. Essential for proliferation of fetal skin fibroblasts. Independently of its glutamine synthetase activity, required for endothelial cell migration during vascular development. Involved in angiogenesis by regulating membrane localization and activation of the GTPase RHOJ, possibly by promoting RHOJ palmitoylation. May act as a palmitoyltransferase for RHOJ: able to autopalmitoylate and then transfer the palmitoyl group to RHOJ. Plays a role in ribosomal 40S subunit biogenesis. Through the interaction with BEST2, inhibits BEST2 channel activity by affecting the gating at the aperture in the absence of intracellular L-glutamate, but sensitizes BEST2 to intracellular L-glutamate, which promotes the opening of BEST2 and thus relieves its inhibitory effect on BEST2. This Cricetulus griseus (Chinese hamster) protein is Glutamine synthetase.